The following is a 1058-amino-acid chain: Carbamoyl phosphate synthase large chain (1058 aa).

Positions 1-401 (MPKRKDIQKI…SLLKACRSLE (401 aa)) are carboxyphosphate synthetic domain. ATP contacts are provided by arginine 129, arginine 169, glycine 175, glycine 176, arginine 208, isoleucine 210, glutamate 215, glycine 241, isoleucine 242, histidine 243, glutamine 284, and glutamate 298. An ATP-grasp 1 domain is found at 133–327 (KQLMQELDQP…IAKLAAKIAV (195 aa)). Residues glutamine 284, glutamate 298, and asparagine 300 each contribute to the Mg(2+) site. Positions 284, 298, and 300 each coordinate Mn(2+). Residues 402 to 546 (IGVCHNEMTS…YSTYELENES (145 aa)) form an oligomerization domain region. Positions 547–929 (VQSNKESILV…ALYKAFEANN (383 aa)) are carbamoyl phosphate synthetic domain. The 191-residue stretch at 671-861 (EKALKELGIP…MAQIATKLIL (191 aa)) folds into the ATP-grasp 2 domain. ATP contacts are provided by arginine 707, serine 746, isoleucine 748, glutamate 752, glycine 777, valine 778, histidine 779, serine 780, glutamine 820, and glutamate 832. Mg(2+)-binding residues include glutamine 820, glutamate 832, and asparagine 834. Mn(2+)-binding residues include glutamine 820, glutamate 832, and asparagine 834. The MGS-like domain occupies 930–1058 (SHLSEFGQIV…ESRCFNIEAI (129 aa)). The segment at 930 to 1058 (SHLSEFGQIV…ESRCFNIEAI (129 aa)) is allosteric domain.

This sequence belongs to the CarB family. In terms of assembly, composed of two chains; the small (or glutamine) chain promotes the hydrolysis of glutamine to ammonia, which is used by the large (or ammonia) chain to synthesize carbamoyl phosphate. Tetramer of heterodimers (alpha,beta)4. Mg(2+) serves as cofactor. Requires Mn(2+) as cofactor.

It carries out the reaction hydrogencarbonate + L-glutamine + 2 ATP + H2O = carbamoyl phosphate + L-glutamate + 2 ADP + phosphate + 2 H(+). It catalyses the reaction hydrogencarbonate + NH4(+) + 2 ATP = carbamoyl phosphate + 2 ADP + phosphate + 2 H(+). Its pathway is amino-acid biosynthesis; L-arginine biosynthesis; carbamoyl phosphate from bicarbonate: step 1/1. It participates in pyrimidine metabolism; UMP biosynthesis via de novo pathway; (S)-dihydroorotate from bicarbonate: step 1/3. Functionally, large subunit of the glutamine-dependent carbamoyl phosphate synthetase (CPSase). CPSase catalyzes the formation of carbamoyl phosphate from the ammonia moiety of glutamine, carbonate, and phosphate donated by ATP, constituting the first step of 2 biosynthetic pathways, one leading to arginine and/or urea and the other to pyrimidine nucleotides. The large subunit (synthetase) binds the substrates ammonia (free or transferred from glutamine from the small subunit), hydrogencarbonate and ATP and carries out an ATP-coupled ligase reaction, activating hydrogencarbonate by forming carboxy phosphate which reacts with ammonia to form carbamoyl phosphate. This chain is Carbamoyl phosphate synthase large chain, found in Streptococcus pyogenes serotype M3 (strain ATCC BAA-595 / MGAS315).